The chain runs to 243 residues: 4-hydroxy-tetrahydrodipicolinate reductase (243 aa).

NAD(+) contacts are provided by residues 9-14, 78-80, and 104-107; these read GANGKM, GTS, and APNF. The active-site Proton donor/acceptor is the His-134. A (S)-2,3,4,5-tetrahydrodipicolinate-binding site is contributed by His-135. Lys-138 (proton donor) is an active-site residue. 144–145 serves as a coordination point for (S)-2,3,4,5-tetrahydrodipicolinate; the sequence is GT.

Belongs to the DapB family.

The protein localises to the cytoplasm. The enzyme catalyses (S)-2,3,4,5-tetrahydrodipicolinate + NAD(+) + H2O = (2S,4S)-4-hydroxy-2,3,4,5-tetrahydrodipicolinate + NADH + H(+). It catalyses the reaction (S)-2,3,4,5-tetrahydrodipicolinate + NADP(+) + H2O = (2S,4S)-4-hydroxy-2,3,4,5-tetrahydrodipicolinate + NADPH + H(+). Its pathway is amino-acid biosynthesis; L-lysine biosynthesis via DAP pathway; (S)-tetrahydrodipicolinate from L-aspartate: step 4/4. Functionally, catalyzes the conversion of 4-hydroxy-tetrahydrodipicolinate (HTPA) to tetrahydrodipicolinate. The sequence is that of 4-hydroxy-tetrahydrodipicolinate reductase from Legionella pneumophila (strain Corby).